Here is a 290-residue protein sequence, read N- to C-terminus: Proteasome assembly chaperone 1 (290 aa).

Residues 1 to 39 (MAATFFGEVVKAPCRAGTEDEEEEEEEEGRRETPEDREV) form a disordered region. Ala-2 carries the N-acetylalanine modification. Thr-18 carries the post-translational modification Phosphothreonine. The segment covering 28-39 (EGRRETPEDREV) has biased composition (basic and acidic residues). At Thr-56 the chain carries Phosphothreonine. Ser-182 is subject to Phosphoserine. N6-acetyllysine is present on Lys-266.

The protein belongs to the PSMG1 family. Forms a heterodimer with PSMG2. The PSMG1-PSMG2 heterodimer interacts directly with the PSMA5 and PSMA7 proteasome alpha subunits. Degraded by the proteasome upon completion of 20S proteasome maturation.

Its subcellular location is the cytoplasm. It is found in the endoplasmic reticulum. Its function is as follows. Chaperone protein which promotes assembly of the 20S proteasome as part of a heterodimer with PSMG2. The PSMG1-PSMG2 heterodimer binds to the PSMA5 and PSMA7 proteasome subunits, promotes assembly of the proteasome alpha subunits into the heteroheptameric alpha ring and prevents alpha ring dimerization. The chain is Proteasome assembly chaperone 1 (PSMG1) from Papio anubis (Olive baboon).